Reading from the N-terminus, the 139-residue chain is Large ribosomal subunit protein uL16c (139 aa).

Positions 1-17 (MLSPKKTKFRKQHRGRM) are enriched in basic residues. Positions 1-23 (MLSPKKTKFRKQHRGRMKGSASK) are disordered.

It belongs to the universal ribosomal protein uL16 family. As to quaternary structure, part of the 50S ribosomal subunit.

The protein resides in the plastid. The protein localises to the chloroplast. The sequence is that of Large ribosomal subunit protein uL16c from Pyropia yezoensis (Susabi-nori).